Reading from the N-terminus, the 200-residue chain is Protein GrpE (200 aa).

Residues 1–11 (MTDNDGQKDFS) are compositionally biased toward basic and acidic residues. The disordered stretch occupies residues 1 to 43 (MTDNDGQKDFSEAAAENAGSKPGEPRVSKPYIMPDDPEETPSE).

This sequence belongs to the GrpE family. Homodimer.

The protein resides in the cytoplasm. Participates actively in the response to hyperosmotic and heat shock by preventing the aggregation of stress-denatured proteins, in association with DnaK and GrpE. It is the nucleotide exchange factor for DnaK and may function as a thermosensor. Unfolded proteins bind initially to DnaJ; upon interaction with the DnaJ-bound protein, DnaK hydrolyzes its bound ATP, resulting in the formation of a stable complex. GrpE releases ADP from DnaK; ATP binding to DnaK triggers the release of the substrate protein, thus completing the reaction cycle. Several rounds of ATP-dependent interactions between DnaJ, DnaK and GrpE are required for fully efficient folding. The polypeptide is Protein GrpE (Afipia carboxidovorans (strain ATCC 49405 / DSM 1227 / KCTC 32145 / OM5) (Oligotropha carboxidovorans)).